A 359-amino-acid polypeptide reads, in one-letter code: S-adenosylmethionine:tRNA ribosyltransferase-isomerase (359 aa).

It belongs to the QueA family. In terms of assembly, monomer.

Its subcellular location is the cytoplasm. It catalyses the reaction 7-aminomethyl-7-carbaguanosine(34) in tRNA + S-adenosyl-L-methionine = epoxyqueuosine(34) in tRNA + adenine + L-methionine + 2 H(+). Its pathway is tRNA modification; tRNA-queuosine biosynthesis. In terms of biological role, transfers and isomerizes the ribose moiety from AdoMet to the 7-aminomethyl group of 7-deazaguanine (preQ1-tRNA) to give epoxyqueuosine (oQ-tRNA). The sequence is that of S-adenosylmethionine:tRNA ribosyltransferase-isomerase from Alcanivorax borkumensis (strain ATCC 700651 / DSM 11573 / NCIMB 13689 / SK2).